The primary structure comprises 323 residues: Serine/threonine-protein phosphatase PP1-gamma catalytic subunit (323 aa).

N-acetylalanine is present on A2. Mn(2+)-binding residues include D64, H66, D92, and N124. H125 acts as the Proton donor in catalysis. Residues H173 and H248 each coordinate Mn(2+). 2 positions are modified to phosphothreonine: T307 and T311.

This sequence belongs to the PPP phosphatase family. PP-1 subfamily. As to quaternary structure, PP1 comprises a catalytic subunit, PPP1CA, PPP1CB or PPP1CC, which is folded into its native form by inhibitor 2 and glycogen synthetase kinase 3, and then complexed to one or several targeting or regulatory subunits. PPP1R12A, PPP1R12B and PPP1R12C mediate binding to myosin. PPP1R3A (in skeletal muscle), PPP1R3B (in liver), PPP1R3C, PPP1R3D and PPP1R3F (in brain) mediate binding to glycogen. PPP1R15A and PPP1R15B mediate binding to EIF2S1. Part of a complex containing PPP1R15B, PP1 and NCK1/2. Interacts with PPP1R3B, PPP1R7 and CDCA2. Interacts with IKFZ1; the interaction targets PPP1CC to pericentromeric heterochromatin, dephosphorylates IKAROS, stabilizes it and prevents it from degradation. Interacts with NOM1 and PPP1R8. Component of the PTW/PP1 phosphatase complex, composed of PPP1R10/PNUTS, TOX4, WDR82, and PPP1CA or PPP1CB or PPP1CC. Interacts with PPP1R8. Interacts with NEK2. Interacts with PPP1R42; the interaction is direct. Interacts with URI1; the interaction is phosphorylation-dependent and occurs in a growth factor-dependent manner. Interacts with FOXP3. Interacts with TMEM225 (via RVxF motif). Interacts with MKI67. Interacts with RRP1B; this targets PPP1CC to the nucleolus. Interacts with DYNLT4. Interacts (via RVxF motif) with FIRRM; regulates PLK1 kinase activity. Interacts with the KNL1 complex subunit KNL1; the interaction is direct and mutually exclusive with KNL1 binding to microtubules. Component of the SHOC2-MRAS-PP1c (SMP) complex consisting of SHOC2, GTP-bound M-Ras/MRAS and the catalytic subunit of protein phosphatase 1 (either PPP1CA, PPP1CB or PPP1CC). SHOC2 and PP1c preferably bind M-Ras/MRAS, but they also bind K-Ras/KRAS, N-Ras/NRAS and H-Ras/HRAS; these interactions are GTP-dependent and both SHOC2 and PP1c are required to form a stable complex. Interacts with SHOC2 in the absence of Ras GTPases. Mn(2+) is required as a cofactor. In terms of processing, phosphorylated by NEK2.

It localises to the cytoplasm. The protein localises to the nucleus. It is found in the cleavage furrow. The protein resides in the nucleolus. Its subcellular location is the nucleoplasm. It localises to the chromosome. The protein localises to the centromere. It is found in the kinetochore. The protein resides in the nucleus speckle. Its subcellular location is the midbody. It localises to the mitochondrion. The protein localises to the cytoskeleton. It is found in the microtubule organizing center. The enzyme catalyses O-phospho-L-seryl-[protein] + H2O = L-seryl-[protein] + phosphate. The catalysed reaction is O-phospho-L-threonyl-[protein] + H2O = L-threonyl-[protein] + phosphate. With respect to regulation, inactivated by binding to URI1. Protein phosphatase that associates with over 200 regulatory proteins to form highly specific holoenzymes which dephosphorylate hundreds of biological targets. Protein phosphatase 1 (PP1) is essential for cell division, and participates in the regulation of glycogen metabolism, muscle contractility and protein synthesis. Dephosphorylates RPS6KB1. Involved in regulation of ionic conductances and long-term synaptic plasticity. May play an important role in dephosphorylating substrates such as the postsynaptic density-associated Ca(2+)/calmodulin dependent protein kinase II. Component of the PTW/PP1 phosphatase complex, which plays a role in the control of chromatin structure and cell cycle progression during the transition from mitosis into interphase. Regulates the recruitment of the SKA complex to kinetochores. Core component of the SHOC2-MRAS-PP1c (SMP) holophosphatase complex that regulates the MAPK pathway activation. Dephosphorylates MKI67 at the onset of anaphase. The SMP complex specifically dephosphorylates the inhibitory phosphorylation at 'Ser-259' of RAF1 kinase, 'Ser-365' of BRAF kinase and 'Ser-214' of ARAF kinase, stimulating their kinase activities. The SMP complex enhances the dephosphorylation activity and substrate specificity of PP1c. The chain is Serine/threonine-protein phosphatase PP1-gamma catalytic subunit (PPP1CC) from Canis lupus familiaris (Dog).